An 848-amino-acid polypeptide reads, in one-letter code: Beta-galactosidase 11 (848 aa).

The first 23 residues, 1–23, serve as a signal peptide directing secretion; it reads MSAAAVLAVVAAAVAALAAAASG. N-linked (GlcNAc...) asparagine glycosylation is present at N29. The Proton donor role is filled by E189. E260 serves as the catalytic Nucleophile. 3 N-linked (GlcNAc...) asparagine glycosylation sites follow: N261, N472, and N783. Positions 750-837 constitute an SUEL-type lectin domain; that stretch reads GGLKPTAVLS…GTLAVQAKCS (88 aa).

The protein belongs to the glycosyl hydrolase 35 family.

The protein localises to the secreted. Its subcellular location is the extracellular space. It is found in the apoplast. The enzyme catalyses Hydrolysis of terminal non-reducing beta-D-galactose residues in beta-D-galactosides.. This chain is Beta-galactosidase 11, found in Oryza sativa subsp. japonica (Rice).